The primary structure comprises 202 residues: MRILGIDPGLTRCGVGVVDVYADRSARLVDVQVVRTSPTAELHHRLLAVGDGIEELVERHRPSVVAIERVFAQDNLSTVMGVAQITGVALVGAARRGLDVALHTPSEVKAAVTGYGQADKKQVATMVARILGLDELPTPADASDALALAICAGWRAGMSRAGIAGTPTPTARATGADAASGAGPTAAQAAWLAAERAQRGRR.

Residues Asp-7, Glu-68, and Asp-141 contribute to the active site. Residues Asp-7, Glu-68, and Asp-141 each coordinate Mg(2+).

The protein belongs to the RuvC family. As to quaternary structure, homodimer which binds Holliday junction (HJ) DNA. The HJ becomes 2-fold symmetrical on binding to RuvC with unstacked arms; it has a different conformation from HJ DNA in complex with RuvA. In the full resolvosome a probable DNA-RuvA(4)-RuvB(12)-RuvC(2) complex forms which resolves the HJ. The cofactor is Mg(2+).

It is found in the cytoplasm. The catalysed reaction is Endonucleolytic cleavage at a junction such as a reciprocal single-stranded crossover between two homologous DNA duplexes (Holliday junction).. The RuvA-RuvB-RuvC complex processes Holliday junction (HJ) DNA during genetic recombination and DNA repair. Endonuclease that resolves HJ intermediates. Cleaves cruciform DNA by making single-stranded nicks across the HJ at symmetrical positions within the homologous arms, yielding a 5'-phosphate and a 3'-hydroxyl group; requires a central core of homology in the junction. The consensus cleavage sequence is 5'-(A/T)TT(C/G)-3'. Cleavage occurs on the 3'-side of the TT dinucleotide at the point of strand exchange. HJ branch migration catalyzed by RuvA-RuvB allows RuvC to scan DNA until it finds its consensus sequence, where it cleaves and resolves the cruciform DNA. This is Crossover junction endodeoxyribonuclease RuvC from Clavibacter michiganensis subsp. michiganensis (strain NCPPB 382).